An 816-amino-acid polypeptide reads, in one-letter code: Oxysterol-binding protein-related protein 1D (816 aa).

A PH domain is found at 92-229 (GAGVAGIMYK…WVEAFQVAKD (138 aa)). Positions 290-321 (KHIILLDTLRQLETEKIELEATVVDETKEHDS) form a coiled coil. Residues 340–362 (SASDSEADNESQDGADVESDEDD) form a disordered region. Residues 344-362 (SEADNESQDGADVESDEDD) are compositionally biased toward acidic residues. Residues 735–764 (NGEYESANAEKLRLEQLQRQARRLQEKGWK) are a coiled coil.

It belongs to the OSBP family. Expressed in roots, leaves, stems and flowers.

Functionally, may be involved in the transport of sterols. This chain is Oxysterol-binding protein-related protein 1D (ORP1D), found in Arabidopsis thaliana (Mouse-ear cress).